We begin with the raw amino-acid sequence, 723 residues long: UPF0313 protein YgiQ (723 aa).

Residues 372 to 650 (AYEMIRFSIN…KALLRYHDPA (279 aa)) enclose the Radical SAM core domain. Residues cysteine 386, cysteine 390, and cysteine 393 each contribute to the [4Fe-4S] cluster site. The disordered stretch occupies residues 686 to 723 (EARRQNRNTRPALTKHTPVEHQRQGLAANKKRGKGAGR). Positions 714 to 723 (NKKRGKGAGR) are enriched in basic residues.

This sequence belongs to the UPF0313 family. Requires [4Fe-4S] cluster as cofactor.

This is UPF0313 protein YgiQ from Salmonella typhimurium (strain LT2 / SGSC1412 / ATCC 700720).